The chain runs to 479 residues: ATP synthase subunit beta (479 aa).

An ATP-binding site is contributed by 153-160; sequence GGAGVGKT.

Belongs to the ATPase alpha/beta chains family. In terms of assembly, F-type ATPases have 2 components, CF(1) - the catalytic core - and CF(0) - the membrane proton channel. CF(1) has five subunits: alpha(3), beta(3), gamma(1), delta(1), epsilon(1). CF(0) has three main subunits: a(1), b(2) and c(9-12). The alpha and beta chains form an alternating ring which encloses part of the gamma chain. CF(1) is attached to CF(0) by a central stalk formed by the gamma and epsilon chains, while a peripheral stalk is formed by the delta and b chains.

Its subcellular location is the cell membrane. The enzyme catalyses ATP + H2O + 4 H(+)(in) = ADP + phosphate + 5 H(+)(out). Its activity is regulated as follows. Increases 2-fold following exposure to low pH. In terms of biological role, produces ATP from ADP in the presence of a proton gradient across the membrane. The catalytic sites are hosted primarily by the beta subunits. The polypeptide is ATP synthase subunit beta (Lactobacillus acidophilus (strain ATCC 700396 / NCK56 / N2 / NCFM)).